We begin with the raw amino-acid sequence, 163 residues long: Photosystem II extrinsic protein V (163 aa).

An N-terminal signal peptide occupies residues 1–26 (MFKKSYQFFALVLFSIFNVLVTSASA). Residues Cys-63, Cys-66, His-67, and His-118 each contribute to the heme c site.

It belongs to the cytochrome c family. PsbV subfamily. PSII is composed of 1 copy each of membrane proteins PsbA, PsbB, PsbC, PsbD, PsbE, PsbF, PsbH, PsbI, PsbJ, PsbK, PsbL, PsbM, PsbT, PsbY, PsbZ, Psb30/Ycf12, at least 3 peripheral proteins of the oxygen-evolving complex and a large number of cofactors. It forms dimeric complexes. The cofactor is heme c.

It is found in the plastid. The protein resides in the chloroplast thylakoid membrane. One of the extrinsic, lumenal subunits of photosystem II (PSII). PSII is a light-driven water plastoquinone oxidoreductase, using light energy to abstract electrons from H(2)O, generating a proton gradient subsequently used for ATP formation. The extrinsic proteins stabilize the structure of photosystem II oxygen-evolving complex (OEC), the ion environment of oxygen evolution and protect the OEC against heat-induced inactivation. The protein is Photosystem II extrinsic protein V of Trieres chinensis (Marine centric diatom).